The chain runs to 183 residues: Peptidyl-tRNA hydrolase (183 aa).

Y14 provides a ligand contact to tRNA. H19 functions as the Proton acceptor in the catalytic mechanism. Residues F64 and N66 each contribute to the tRNA site.

The protein belongs to the PTH family. Monomer.

It localises to the cytoplasm. The catalysed reaction is an N-acyl-L-alpha-aminoacyl-tRNA + H2O = an N-acyl-L-amino acid + a tRNA + H(+). Its function is as follows. Hydrolyzes ribosome-free peptidyl-tRNAs (with 1 or more amino acids incorporated), which drop off the ribosome during protein synthesis, or as a result of ribosome stalling. Catalyzes the release of premature peptidyl moieties from peptidyl-tRNA molecules trapped in stalled 50S ribosomal subunits, and thus maintains levels of free tRNAs and 50S ribosomes. The chain is Peptidyl-tRNA hydrolase from Syntrophomonas wolfei subsp. wolfei (strain DSM 2245B / Goettingen).